A 204-amino-acid chain; its full sequence is Pyridoxal 5'-phosphate synthase subunit PdxT (204 aa).

52 to 54 (GES) provides a ligand contact to L-glutamine. The Nucleophile role is filled by C84. L-glutamine-binding positions include R116 and 143 to 144 (IR). Residues H184 and E186 each act as charge relay system in the active site.

Belongs to the glutaminase PdxT/SNO family. In terms of assembly, in the presence of PdxS, forms a dodecamer of heterodimers. Only shows activity in the heterodimer.

The enzyme catalyses aldehydo-D-ribose 5-phosphate + D-glyceraldehyde 3-phosphate + L-glutamine = pyridoxal 5'-phosphate + L-glutamate + phosphate + 3 H2O + H(+). It catalyses the reaction L-glutamine + H2O = L-glutamate + NH4(+). Its pathway is cofactor biosynthesis; pyridoxal 5'-phosphate biosynthesis. Catalyzes the hydrolysis of glutamine to glutamate and ammonia as part of the biosynthesis of pyridoxal 5'-phosphate. The resulting ammonia molecule is channeled to the active site of PdxS. This Pyrobaculum aerophilum (strain ATCC 51768 / DSM 7523 / JCM 9630 / CIP 104966 / NBRC 100827 / IM2) protein is Pyridoxal 5'-phosphate synthase subunit PdxT.